The following is a 540-amino-acid chain: MGFEELLHKVGGFGPFQLRNLVLLALPRFLLPMHFLLPIFMAAVPAHHCALPDAPANLSHQDLWLKTHLPRETDGSFSSCLRFAYPQALPNVTLGTEVYNSGEPEGEPLTVPCSQGWEYDRSEFSSTIATEWDLVCEQRGLNKVTSTCFFIGVLLGAVVYGYLSDRFGRRRLLLVAYVSTLALGLMSAASVNYIMFVTTRMLTGSALAGFTIIVLPLELEWLDVEHRTVAGVISTTFWTGGVLLLTLVGYLIRSWRWLLLAATLPCVPGIISIWWVPESARWLLTQGRVEEAKKYLSICAKLNGRPISEDSLSQEALNKVITMERVSQRPSYLDLFRTSQLRHVSLCCMMMWFGVNFSYYGLTLDASGLGLTVYQTQLLFGAVEVPSKITVFFLVRLVGRRLTEAGMLLATALTFGISLLVSSDTKSWITALVVIGKAFSEAAFTTAYLFTSELYPTVLRQTGMGFTALIGRLGASLAPLVVLLDGVWLLLPKLAYGGISFLAACTVLLLPETKKAQLPETIQDVERKGRKIDRSGTELA.

Transmembrane regions (helical) follow at residues 21–41, 144–164, 172–192, 202–222, 232–252, 257–277, 344–364, 378–398, 402–422, 429–449, 462–484, and 488–510; these read LVLL…PIFM, VTST…GYLS, LLLV…ASVN, LTGS…LEWL, VIST…GYLI, WLLL…WWVP, VSLC…GLTL, LLFG…VRLV, LTEA…LLVS, ITAL…TAYL, TGMG…VVLL, and WLLL…VLLL.

The protein belongs to the major facilitator (TC 2.A.1) superfamily. Organic cation transporter (TC 2.A.1.19) family. As to expression, abundant expression in male and female kidney. In kidney, expressed at the brush border of the proximal tubule S3 segment (S3) in the outer stripe and medullary rays. In kidney, expression is higher in female than male. Also expressed in female liver.

The protein localises to the basolateral cell membrane. It localises to the apical cell membrane. The protein resides in the cell membrane. It catalyses the reaction orotate(out) + L-glutamate(in) = orotate(in) + L-glutamate(out). It carries out the reaction 3',5'-cyclic GMP(in) = 3',5'-cyclic GMP(out). The enzyme catalyses GMP(in) = GMP(out). The catalysed reaction is 2'-deoxyguanosine(in) = 2'-deoxyguanosine(out). It catalyses the reaction GDP(in) = GDP(out). It carries out the reaction guanosine(in) = guanosine(out). The enzyme catalyses GTP(in) = GTP(out). The catalysed reaction is 3',5'-cyclic AMP(in) = 3',5'-cyclic AMP(out). It catalyses the reaction creatinine(in) = creatinine(out). It carries out the reaction prostaglandin E2(out) = prostaglandin E2(in). The enzyme catalyses 2-oxoglutarate(in) = 2-oxoglutarate(out). The catalysed reaction is glutarate(in) = glutarate(out). It catalyses the reaction urate(out) = urate(in). It carries out the reaction estrone 3-sulfate(out) = estrone 3-sulfate(in). Functions as a Na(+)-independent bidirectional multispecific transporter. Contributes to the renal and hepatic elimination of endogenous organic compounds from the systemic circulation into the urine and bile, respectively. Capable of transporting a wide range of purine and pyrimidine nucleobases, nucleosides, and nucleotides with cGMP, 2'deoxyguanosine and GMP being the preferred substrates. Functions as a pH- and chloride-independent cGMP bidirectional facilitative transporter that can regulate both intracellular and extracellular levels of cGMP and may be involved in cGMP signaling pathways. Mediates orotate/glutamate bidirectional exchange and most likely display a physiological role in hepatic release of glutamate into the blood. Involved in renal secretion and possible reabsorption of creatinine. Able to uptake prostaglandin E2 (PGE2) and may contribute to PGE2 renal excretion. Also transports alpha-ketoglutarate and urate. Unlike human hortolog, able to transport glutarate. Apart from the orotate/glutamate exchange, the counterions for the uptake of other SLC22A7/OAT2 substrates remain to be identified. The sequence is that of Solute carrier family 22 member 7 from Mus musculus (Mouse).